The following is a 1399-amino-acid chain: DNA-directed RNA polymerase subunit beta' (1399 aa).

Positions 70, 72, 85, and 88 each coordinate Zn(2+). Mg(2+)-binding residues include Asp-460, Asp-462, and Asp-464. Zn(2+) contacts are provided by Cys-814, Cys-888, Cys-895, and Cys-898.

It belongs to the RNA polymerase beta' chain family. The RNAP catalytic core consists of 2 alpha, 1 beta, 1 beta' and 1 omega subunit. When a sigma factor is associated with the core the holoenzyme is formed, which can initiate transcription. Mg(2+) is required as a cofactor. It depends on Zn(2+) as a cofactor.

The catalysed reaction is RNA(n) + a ribonucleoside 5'-triphosphate = RNA(n+1) + diphosphate. Its function is as follows. DNA-dependent RNA polymerase catalyzes the transcription of DNA into RNA using the four ribonucleoside triphosphates as substrates. The chain is DNA-directed RNA polymerase subunit beta' from Ectopseudomonas mendocina (strain ymp) (Pseudomonas mendocina).